Reading from the N-terminus, the 187-residue chain is Large ribosomal subunit protein uL10 (187 aa).

Belongs to the universal ribosomal protein uL10 family. As to quaternary structure, part of the ribosomal stalk of the 50S ribosomal subunit. The N-terminus interacts with L11 and the large rRNA to form the base of the stalk. The C-terminus forms an elongated spine to which L12 dimers bind in a sequential fashion forming a multimeric L10(L12)X complex.

Forms part of the ribosomal stalk, playing a central role in the interaction of the ribosome with GTP-bound translation factors. This chain is Large ribosomal subunit protein uL10, found in Synechococcus sp. (strain JA-2-3B'a(2-13)) (Cyanobacteria bacterium Yellowstone B-Prime).